The sequence spans 42 residues: MSNVGTTGRIPLWLIATVAGILVLTVVGIFFYGSYSGLGSSL.

A helical transmembrane segment spans residues 10–30 (IPLWLIATVAGILVLTVVGIF).

It belongs to the PsbJ family. In terms of assembly, PSII is composed of 1 copy each of membrane proteins PsbA, PsbB, PsbC, PsbD, PsbE, PsbF, PsbH, PsbI, PsbJ, PsbK, PsbL, PsbM, PsbT, PsbX, PsbY, PsbZ, Psb30/Ycf12, at least 3 peripheral proteins of the oxygen-evolving complex and a large number of cofactors. It forms dimeric complexes.

The protein localises to the plastid. Its subcellular location is the chloroplast thylakoid membrane. Its function is as follows. One of the components of the core complex of photosystem II (PSII). PSII is a light-driven water:plastoquinone oxidoreductase that uses light energy to abstract electrons from H(2)O, generating O(2) and a proton gradient subsequently used for ATP formation. It consists of a core antenna complex that captures photons, and an electron transfer chain that converts photonic excitation into a charge separation. The sequence is that of Photosystem II reaction center protein J from Chara vulgaris (Common stonewort).